The chain runs to 231 residues: GTP cyclohydrolase III (231 aa).

Belongs to the archaeal-type GTP cyclohydrolase family.

The enzyme catalyses GTP + 3 H2O = 2-amino-5-formylamino-6-(5-phospho-D-ribosylamino)pyrimidin-4(3H)-one + 2 phosphate + 2 H(+). Its function is as follows. Catalyzes the formation of 2-amino-5-formylamino-6-ribofuranosylamino-4(3H)-pyrimidinone ribonucleotide monophosphate and inorganic phosphate from GTP. Also has an independent pyrophosphate phosphohydrolase activity. This is GTP cyclohydrolase III from Saccharolobus solfataricus (strain ATCC 35092 / DSM 1617 / JCM 11322 / P2) (Sulfolobus solfataricus).